The sequence spans 366 residues: 3-dehydroquinate synthase (366 aa).

NAD(+)-binding positions include 75–80, 109–113, 133–134, K146, K155, and 173–176; these read DGEQYK, GVIGD, TT, and CLST. Residues E188, H251, and H268 each contribute to the Zn(2+) site.

It belongs to the sugar phosphate cyclases superfamily. Dehydroquinate synthase family. It depends on Co(2+) as a cofactor. Zn(2+) is required as a cofactor. Requires NAD(+) as cofactor.

It is found in the cytoplasm. The catalysed reaction is 7-phospho-2-dehydro-3-deoxy-D-arabino-heptonate = 3-dehydroquinate + phosphate. It functions in the pathway metabolic intermediate biosynthesis; chorismate biosynthesis; chorismate from D-erythrose 4-phosphate and phosphoenolpyruvate: step 2/7. Catalyzes the conversion of 3-deoxy-D-arabino-heptulosonate 7-phosphate (DAHP) to dehydroquinate (DHQ). The protein is 3-dehydroquinate synthase of Vibrio campbellii (strain ATCC BAA-1116).